A 587-amino-acid chain; its full sequence is Trihelix transcription factor GTL1 (587 aa).

2 stretches are compositionally biased toward gly residues: residues 1-10 (MEQGGGGGGN) and 41-54 (GGLG…GGGS). A disordered region spans residues 1 to 63 (MEQGGGGGGN…SASSSSGNRW (63 aa)). Residues 55-119 (ASSSSGNRWP…KCKEKFENVQ (65 aa)) enclose the Myb-like 1 domain. The short motif at 96-103 (SRKLLELG) is the Nuclear localization signal 1 element. The segment covering 173-194 (SSSPFPVFSQPQPQTQTQPPQT) has biased composition (low complexity). The disordered stretch occupies residues 173 to 264 (SSSPFPVFSQ…RKRGNRGGGG (92 aa)). The segment covering 201–210 (PTPPPLPLPS) has biased composition (pro residues). Residues 221–232 (SSHSSSTASGMG) are compositionally biased toward low complexity. Residues 233–242 (SDDDDDDMDV) show a composition bias toward acidic residues. The stretch at 285 to 328 (QRSFLEALEKREQERLDREEAWKRQEMARLAREHEVMSQERAAS) forms a coiled coil. The interval 348–435 (QLPPSLSSQP…EQSSLPSSSR (88 aa)) is disordered. Residues 356 to 366 (QPPPPYQPPPA) show a composition bias toward pro residues. Low complexity-rich tracts occupy residues 379–395 (AQSQ…QQQI) and 411–434 (QKQQ…PSSS). In terms of domain architecture, Myb-like 2 spans 434–492 (SRWPKAEILALINLRSGMEPRYQDNVPKGLLWEEISTSMKRMGYNRNAKRCKEKWENIN). A Nuclear localization signal 2 motif is present at residues 472–479 (MKRMGYNR). A disordered region spans residues 530-587 (GGGSSTSGLPQDQKQSPVTAMKPPQEGLVNVQQTHGSASTEEEEPIEESPQGTEKKTL). Composition is skewed to polar residues over residues 538–547 (LPQDQKQSPV) and 559–568 (NVQQTHGSAS).

As to expression, mostly expressed in siliques, and, to a lower extent, in growing root hairs, leaves, stems, and flowers. Present in abaxial epidermal cells, predominantly in guard cells, pavement cells, and meristemoids.

The protein localises to the nucleus. Transcription repressor that binds specific DNA sequence such as GT3 box 5'-GGTAAA-3' in the SDD1 promoter. Negative regulator of water use efficiency (WUE) via the promotion of stomatal density and distribution by the transcription repression of SDD1. Regulates the expression of several cell cycle genes and endoreduplication, especially in trichomes where it prevents ploidy-dependent plant cell growth. Regulates negatively root hair growth by directly binding RSL4 promoter and repressing RSL4 expression. The polypeptide is Trihelix transcription factor GTL1 (Arabidopsis thaliana (Mouse-ear cress)).